The chain runs to 658 residues: Glycogen debranching enzyme (658 aa).

Asp336 acts as the Nucleophile in catalysis. The Proton donor role is filled by Glu371. Residues 459 to 484 (EANGEENRDGTNSNYSDNHGKEGLGG) form a disordered region.

Belongs to the glycosyl hydrolase 13 family.

It carries out the reaction Hydrolysis of (1-&gt;6)-alpha-D-glucosidic linkages to branches with degrees of polymerization of three or four glucose residues in limit dextrin.. It participates in glycan degradation; glycogen degradation. In terms of biological role, removes maltotriose and maltotetraose chains that are attached by 1,6-alpha-linkage to the limit dextrin main chain, generating a debranched limit dextrin. The sequence is that of Glycogen debranching enzyme from Salmonella paratyphi A (strain ATCC 9150 / SARB42).